The chain runs to 218 residues: Protein-L-isoaspartate O-methyltransferase (218 aa).

The active site involves Ser-63.

The protein belongs to the methyltransferase superfamily. L-isoaspartyl/D-aspartyl protein methyltransferase family.

The protein localises to the cytoplasm. It carries out the reaction [protein]-L-isoaspartate + S-adenosyl-L-methionine = [protein]-L-isoaspartate alpha-methyl ester + S-adenosyl-L-homocysteine. Functionally, catalyzes the methyl esterification of L-isoaspartyl residues in peptides and proteins that result from spontaneous decomposition of normal L-aspartyl and L-asparaginyl residues. It plays a role in the repair and/or degradation of damaged proteins. The protein is Protein-L-isoaspartate O-methyltransferase of Syntrophus aciditrophicus (strain SB).